We begin with the raw amino-acid sequence, 872 residues long: Alanine--tRNA ligase (872 aa).

Residues H567, H571, C669, and H673 each coordinate Zn(2+).

The protein belongs to the class-II aminoacyl-tRNA synthetase family. It depends on Zn(2+) as a cofactor.

Its subcellular location is the cytoplasm. It carries out the reaction tRNA(Ala) + L-alanine + ATP = L-alanyl-tRNA(Ala) + AMP + diphosphate. Its function is as follows. Catalyzes the attachment of alanine to tRNA(Ala) in a two-step reaction: alanine is first activated by ATP to form Ala-AMP and then transferred to the acceptor end of tRNA(Ala). Also edits incorrectly charged Ser-tRNA(Ala) and Gly-tRNA(Ala) via its editing domain. This is Alanine--tRNA ligase from Streptococcus agalactiae serotype V (strain ATCC BAA-611 / 2603 V/R).